The primary structure comprises 230 residues: Cytidylate kinase (230 aa).

12 to 20 (GPSGAGKGT) is an ATP binding site.

This sequence belongs to the cytidylate kinase family. Type 1 subfamily.

It localises to the cytoplasm. The catalysed reaction is CMP + ATP = CDP + ADP. It carries out the reaction dCMP + ATP = dCDP + ADP. The protein is Cytidylate kinase of Shewanella loihica (strain ATCC BAA-1088 / PV-4).